The primary structure comprises 485 residues: Fumarate hydratase, mitochondrial (485 aa).

Residues 1-19 (MLSASRKLNNQQFLKTIRN) constitute a mitochondrion transit peptide. Residues 118–120 (SGT), 150–153 (HPND), 160–162 (SSN), and threonine 208 contribute to the substrate site. The Proton donor/acceptor role is filled by histidine 209. Serine 339 is an active-site residue. Residues serine 340 and 345–347 (KVN) contribute to the substrate site.

The protein belongs to the class-II fumarase/aspartase family. Fumarase subfamily. In terms of assembly, homotetramer.

It localises to the mitochondrion. The protein resides in the cytoplasm. It catalyses the reaction (S)-malate = fumarate + H2O. It functions in the pathway carbohydrate metabolism; tricarboxylic acid cycle; (S)-malate from fumarate: step 1/1. In terms of biological role, catalyzes the reversible stereospecific interconversion of fumarate to L-malate. Its function is as follows. Catalyzes the hydration of fumarate to L-malate in the tricarboxylic acid (TCA) cycle to facilitate a transition step in the production of energy in the form of NADH. The sequence is that of Fumarate hydratase, mitochondrial from Dictyostelium discoideum (Social amoeba).